A 268-amino-acid polypeptide reads, in one-letter code: MIKVLSPAKINLGLWVLGRLPSGYHEILTLYQEIPFYDEIYIREGVLRVETNIGIPQEENLVYKGLREFERITGIEINYSIFIQKNIPPGAGLGGGSSNLAVVLKKVNELLGSPLSEEELRELVGSISADAPFFLLGKSAIGRGKGEVLEPVETEISGKITLVIPQVSSSTGRVYSSLREEHFVTPEYAEEKIQRIISGEVEEIENVLGDIARELYPEINEVYRFVEYLGFKPFVSGSGSTVYFFGGASEELKKAAKMRGWKVVELEL.

Residue Lys-9 is part of the active site. 88 to 98 (PPGAGLGGGSS) serves as a coordination point for ATP. Asp-130 is an active-site residue.

It belongs to the GHMP kinase family. IspE subfamily.

It carries out the reaction 4-CDP-2-C-methyl-D-erythritol + ATP = 4-CDP-2-C-methyl-D-erythritol 2-phosphate + ADP + H(+). It participates in isoprenoid biosynthesis; isopentenyl diphosphate biosynthesis via DXP pathway; isopentenyl diphosphate from 1-deoxy-D-xylulose 5-phosphate: step 3/6. Its function is as follows. Catalyzes the phosphorylation of the position 2 hydroxy group of 4-diphosphocytidyl-2C-methyl-D-erythritol. The polypeptide is 4-diphosphocytidyl-2-C-methyl-D-erythritol kinase (Aquifex aeolicus (strain VF5)).